The following is a 568-amino-acid chain: ATP-dependent RNA helicase MRH4, mitochondrial (568 aa).

Residues 1–50 constitute a mitochondrion transit peptide; the sequence is MVSILAIRTFNPLGHFVSTQCVRAYAINSVRAGSKSSSVRAGSKNDTTRA. A compositionally biased stretch (polar residues) spans 36–49; sequence SSSVRAGSKNDTTR. The disordered stretch occupies residues 36 to 64; it reads SSSVRAGSKNDTTRASSKKNKAGKSKLQL. Residues 143–150 carry the Q motif motif; the sequence is EIHPSPIQ. Residues 160-348 form the Helicase ATP-binding domain; it reads NLMEPKLQVH…TKMFPNAIPL (189 aa). An ATP-binding site is contributed by 173–180; that stretch reads AETGSGKT. Positions 296–299 match the DEAD box motif; that stretch reads DEAD. The Helicase C-terminal domain occupies 379–568; that stretch reads ALAQTLYAIA…TILKKNKALT (190 aa).

The protein belongs to the DEAD box helicase family. MRH4 subfamily.

The protein resides in the mitochondrion. It catalyses the reaction ATP + H2O = ADP + phosphate + H(+). Functionally, ATP-binding RNA helicase involved in mitochondrial RNA metabolism. Required for maintenance of mitochondrial DNA. The protein is ATP-dependent RNA helicase MRH4, mitochondrial (MRH4) of Candida glabrata (strain ATCC 2001 / BCRC 20586 / JCM 3761 / NBRC 0622 / NRRL Y-65 / CBS 138) (Yeast).